The sequence spans 291 residues: 4-diphosphocytidyl-2-C-methyl-D-erythritol kinase (291 aa).

The active site involves lysine 10. 94–104 contacts ATP; the sequence is PVSAGLAGGSS. Aspartate 136 is an active-site residue.

This sequence belongs to the GHMP kinase family. IspE subfamily.

The enzyme catalyses 4-CDP-2-C-methyl-D-erythritol + ATP = 4-CDP-2-C-methyl-D-erythritol 2-phosphate + ADP + H(+). Its pathway is isoprenoid biosynthesis; isopentenyl diphosphate biosynthesis via DXP pathway; isopentenyl diphosphate from 1-deoxy-D-xylulose 5-phosphate: step 3/6. In terms of biological role, catalyzes the phosphorylation of the position 2 hydroxy group of 4-diphosphocytidyl-2C-methyl-D-erythritol. This chain is 4-diphosphocytidyl-2-C-methyl-D-erythritol kinase, found in Listeria welshimeri serovar 6b (strain ATCC 35897 / DSM 20650 / CCUG 15529 / CIP 8149 / NCTC 11857 / SLCC 5334 / V8).